Consider the following 379-residue polypeptide: Queuine tRNA-ribosyltransferase (379 aa).

Asp-93 acts as the Proton acceptor in catalysis. Substrate-binding positions include 93–97 (DSGGF), Asp-147, Gln-191, and Gly-218. Residues 249 to 255 (GVGKPED) form an RNA binding region. Asp-268 serves as the catalytic Nucleophile. The interval 273-277 (TRNAR) is RNA binding; important for wobble base 34 recognition. Residues Cys-306, Cys-308, Cys-311, and His-337 each contribute to the Zn(2+) site.

Belongs to the queuine tRNA-ribosyltransferase family. As to quaternary structure, homodimer. Within each dimer, one monomer is responsible for RNA recognition and catalysis, while the other monomer binds to the replacement base PreQ1. Requires Zn(2+) as cofactor.

The enzyme catalyses 7-aminomethyl-7-carbaguanine + guanosine(34) in tRNA = 7-aminomethyl-7-carbaguanosine(34) in tRNA + guanine. It functions in the pathway tRNA modification; tRNA-queuosine biosynthesis. Catalyzes the base-exchange of a guanine (G) residue with the queuine precursor 7-aminomethyl-7-deazaguanine (PreQ1) at position 34 (anticodon wobble position) in tRNAs with GU(N) anticodons (tRNA-Asp, -Asn, -His and -Tyr). Catalysis occurs through a double-displacement mechanism. The nucleophile active site attacks the C1' of nucleotide 34 to detach the guanine base from the RNA, forming a covalent enzyme-RNA intermediate. The proton acceptor active site deprotonates the incoming PreQ1, allowing a nucleophilic attack on the C1' of the ribose to form the product. After dissociation, two additional enzymatic reactions on the tRNA convert PreQ1 to queuine (Q), resulting in the hypermodified nucleoside queuosine (7-(((4,5-cis-dihydroxy-2-cyclopenten-1-yl)amino)methyl)-7-deazaguanosine). The chain is Queuine tRNA-ribosyltransferase from Actinobacillus succinogenes (strain ATCC 55618 / DSM 22257 / CCUG 43843 / 130Z).